The sequence spans 338 residues: Methionyl-tRNA formyltransferase (338 aa).

110–113 (SLLP) contacts (6S)-5,6,7,8-tetrahydrofolate.

Belongs to the Fmt family.

It catalyses the reaction L-methionyl-tRNA(fMet) + (6R)-10-formyltetrahydrofolate = N-formyl-L-methionyl-tRNA(fMet) + (6S)-5,6,7,8-tetrahydrofolate + H(+). In terms of biological role, attaches a formyl group to the free amino group of methionyl-tRNA(fMet). The formyl group appears to play a dual role in the initiator identity of N-formylmethionyl-tRNA by promoting its recognition by IF2 and preventing the misappropriation of this tRNA by the elongation apparatus. The protein is Methionyl-tRNA formyltransferase of Synechococcus sp. (strain CC9605).